Consider the following 306-residue polypeptide: Putative syntaxin-131 (306 aa).

Met-1 bears the N-acetylmethionine mark. Over 1-276 the chain is Cytoplasmic; sequence MNDLLKGSLE…AVKSQKSSRK (276 aa). A compositionally biased stretch (basic and acidic residues) spans 11 to 23; sequence FSRDRSNRSDIES. The disordered stretch occupies residues 11-35; it reads FSRDRSNRSDIESGHGPGNSGDLGL. Coiled coils occupy residues 35–72 and 134–162; these read LSGF…VTKA and KKKF…VERR. Positions 205-267 constitute a t-SNARE coiled-coil homology domain; the sequence is LAEIQERHDA…QSGNNQLTKA (63 aa). Residues 277–297 form a helical; Anchor for type IV membrane protein membrane-spanning segment; that stretch reads WMCIAILILLIIIIITVISVL. Topologically, residues 298-306 are vesicular; the sequence is KPWTQKNGA.

This sequence belongs to the syntaxin family. As to quaternary structure, part of the t-SNARE complex.

The protein localises to the membrane. Its function is as follows. Vesicle trafficking protein that functions in the secretory pathway. The polypeptide is Putative syntaxin-131 (SYP131) (Arabidopsis thaliana (Mouse-ear cress)).